Here is a 527-residue protein sequence, read N- to C-terminus: Bifunctional purine biosynthesis protein PurH (527 aa).

Residues 8-156 form the MGS-like domain; the sequence is AGAKRPIRRA…KNHPSVAVVV (149 aa).

This sequence belongs to the PurH family.

It carries out the reaction (6R)-10-formyltetrahydrofolate + 5-amino-1-(5-phospho-beta-D-ribosyl)imidazole-4-carboxamide = 5-formamido-1-(5-phospho-D-ribosyl)imidazole-4-carboxamide + (6S)-5,6,7,8-tetrahydrofolate. The enzyme catalyses IMP + H2O = 5-formamido-1-(5-phospho-D-ribosyl)imidazole-4-carboxamide. The protein operates within purine metabolism; IMP biosynthesis via de novo pathway; 5-formamido-1-(5-phospho-D-ribosyl)imidazole-4-carboxamide from 5-amino-1-(5-phospho-D-ribosyl)imidazole-4-carboxamide (10-formyl THF route): step 1/1. It functions in the pathway purine metabolism; IMP biosynthesis via de novo pathway; IMP from 5-formamido-1-(5-phospho-D-ribosyl)imidazole-4-carboxamide: step 1/1. This is Bifunctional purine biosynthesis protein PurH from Mycobacterium sp. (strain JLS).